The following is a 479-amino-acid chain: MDYHSPYFFGYLLGMIHLLGIVAALHALFTVRTAQGAIAWAMPLLFIPYLTLIPYLIFGARSFYAYIKARRQANQEMHVAMANLNWRPWVEEALTARESESYAALRAMPKLGRMPCLANNQVKLLINGKATFDAIFAAIEKARDVVLVQFFIIHDDTLGKALQQLLLRKAAEGVQVFVLYDRVGSHALPASYSQMLRDGGVQIHAFATRRGWFNRFQVNFRNHRKIVVVDGLLGFIGGHNVGDEYLGEHPQLSPWRDTHVQISGPVLACLQESFAEDWYWATRQLPPLILPDTYPDNGVLCQALASGPADPQETCSLFFLEAIHSATRRVWITSPYFIPDEAVFAALRLAVLRGVDVRVLIPSRPDHRIVYAASSLFAFEAVRAGVRMFRYQPGFLHQKVVLVDDDVSAIGSANLDNRSFRLNFEITLLTVDRGFADQVEHMLHEDFEHAREITAEDTQDTHRLQQLGMRIARLISPIL.

Helical transmembrane passes span 8-28 (FFGYLLGMIHLLGIVAALHAL) and 38-58 (IAWAMPLLFIPYLTLIPYLIF). 2 consecutive PLD phosphodiesterase domains span residues 218–245 (VNFRNHRKIVVVDGLLGFIGGHNVGDEY) and 392–419 (QPGFLHQKVVLVDDDVSAIGSANLDNRS). Active-site residues include His223, Lys225, Asp230, His397, Lys399, and Asp404.

This sequence belongs to the phospholipase D family. Cardiolipin synthase subfamily. ClsA sub-subfamily.

Its subcellular location is the cell inner membrane. It carries out the reaction 2 a 1,2-diacyl-sn-glycero-3-phospho-(1'-sn-glycerol) = a cardiolipin + glycerol. Catalyzes the reversible phosphatidyl group transfer from one phosphatidylglycerol molecule to another to form cardiolipin (CL) (diphosphatidylglycerol) and glycerol. The polypeptide is Cardiolipin synthase A (Pseudomonas putida (strain ATCC 700007 / DSM 6899 / JCM 31910 / BCRC 17059 / LMG 24140 / F1)).